The primary structure comprises 203 residues: Outer-membrane lipoprotein LolB (203 aa).

An N-terminal signal peptide occupies residues 1–21 (MTGRWSPRLLAGLLAALVLSG). The N-palmitoyl cysteine moiety is linked to residue C22. C22 is lipidated: S-diacylglycerol cysteine.

It belongs to the LolB family. As to quaternary structure, monomer.

The protein resides in the cell outer membrane. In terms of biological role, plays a critical role in the incorporation of lipoproteins in the outer membrane after they are released by the LolA protein. The polypeptide is Outer-membrane lipoprotein LolB (Halorhodospira halophila (strain DSM 244 / SL1) (Ectothiorhodospira halophila (strain DSM 244 / SL1))).